A 508-amino-acid chain; its full sequence is Photosystem II CP47 reaction center protein (508 aa).

6 helical membrane passes run 21 to 36, 101 to 115, 140 to 156, 203 to 218, 237 to 252, and 457 to 472; these read AVHLMHTALVSGWAGS, ITLSGLLFLSAIWHW, GIHLFLSGVLCFGFGAF, IAAGILGILAGLFHLS, VLSSSIAAVFFAAFVV, and TFALIFFFGHIWHGAR.

This sequence belongs to the PsbB/PsbC family. PsbB subfamily. As to quaternary structure, PSII is composed of 1 copy each of membrane proteins PsbA, PsbB, PsbC, PsbD, PsbE, PsbF, PsbH, PsbI, PsbJ, PsbK, PsbL, PsbM, PsbT, PsbX, PsbY, PsbZ, Psb30/Ycf12, at least 3 peripheral proteins of the oxygen-evolving complex and a large number of cofactors. It forms dimeric complexes. Binds multiple chlorophylls. PSII binds additional chlorophylls, carotenoids and specific lipids. serves as cofactor.

Its subcellular location is the plastid. The protein resides in the chloroplast thylakoid membrane. Functionally, one of the components of the core complex of photosystem II (PSII). It binds chlorophyll and helps catalyze the primary light-induced photochemical processes of PSII. PSII is a light-driven water:plastoquinone oxidoreductase, using light energy to abstract electrons from H(2)O, generating O(2) and a proton gradient subsequently used for ATP formation. In Psilotum nudum (Whisk fern), this protein is Photosystem II CP47 reaction center protein.